A 60-amino-acid chain; its full sequence is Toxin 4.9.6 (60 aa).

Cystine bridges form between Cys3-Cys22, Cys17-Cys38, Cys40-Cys52, and Cys53-Cys58.

It belongs to the three-finger toxin family. Short-chain subfamily. Orphan group XI sub-subfamily. As to expression, expressed by the venom gland.

Its subcellular location is the secreted. The protein is Toxin 4.9.6 of Dendroaspis viridis (Western green mamba).